The chain runs to 479 residues: Glutamyl-tRNA(Gln) amidotransferase subunit A (479 aa).

Active-site charge relay system residues include Lys75 and Ser150. Ser174 serves as the catalytic Acyl-ester intermediate.

It belongs to the amidase family. GatA subfamily. As to quaternary structure, heterotrimer of A, B and C subunits.

It catalyses the reaction L-glutamyl-tRNA(Gln) + L-glutamine + ATP + H2O = L-glutaminyl-tRNA(Gln) + L-glutamate + ADP + phosphate + H(+). Functionally, allows the formation of correctly charged Gln-tRNA(Gln) through the transamidation of misacylated Glu-tRNA(Gln) in organisms which lack glutaminyl-tRNA synthetase. The reaction takes place in the presence of glutamine and ATP through an activated gamma-phospho-Glu-tRNA(Gln). The chain is Glutamyl-tRNA(Gln) amidotransferase subunit A from Synechococcus sp. (strain ATCC 27144 / PCC 6301 / SAUG 1402/1) (Anacystis nidulans).